We begin with the raw amino-acid sequence, 511 residues long: Maturase K (511 aa).

The protein belongs to the intron maturase 2 family. MatK subfamily.

Its subcellular location is the plastid. It is found in the chloroplast. Its function is as follows. Usually encoded in the trnK tRNA gene intron. Probably assists in splicing its own and other chloroplast group II introns. The sequence is that of Maturase K from Triticum aestivum (Wheat).